Reading from the N-terminus, the 327-residue chain is Zinc transport protein ZntB (327 aa).

The Cytoplasmic segment spans residues 1-273; sequence MEAIKGSEVN…SRRSYTMSLM (273 aa). Residues 274-294 traverse the membrane as a helical segment; the sequence is AMVFLPSTFLTGLFGVNLGGI. The Periplasmic segment spans residues 295-300; it reads PGGGWH. The helical transmembrane segment at 301–321 threads the bilayer; it reads LGFSVFCVALVLLIGGVTWWL. The Cytoplasmic portion of the chain corresponds to 322 to 327; it reads HRSKWL.

This sequence belongs to the CorA metal ion transporter (MIT) (TC 1.A.35) family.

The protein localises to the cell inner membrane. The catalysed reaction is Zn(2+)(out) + H(+)(out) = Zn(2+)(in) + H(+)(in). Zinc transporter. Acts as a Zn(2+):proton symporter, which likely mediates zinc ion uptake. This Cronobacter sakazakii (strain ATCC BAA-894) (Enterobacter sakazakii) protein is Zinc transport protein ZntB.